The sequence spans 368 residues: Ribosomal RNA large subunit methyltransferase M (368 aa).

Residues Ser-189, 222–225, Asp-241, Asp-261, and Asp-278 contribute to the S-adenosyl-L-methionine site; that span reads CPGG. Lys-307 (proton acceptor) is an active-site residue.

This sequence belongs to the class I-like SAM-binding methyltransferase superfamily. RNA methyltransferase RlmE family. RlmM subfamily. Monomer.

It is found in the cytoplasm. The enzyme catalyses cytidine(2498) in 23S rRNA + S-adenosyl-L-methionine = 2'-O-methylcytidine(2498) in 23S rRNA + S-adenosyl-L-homocysteine + H(+). Its function is as follows. Catalyzes the 2'-O-methylation at nucleotide C2498 in 23S rRNA. The chain is Ribosomal RNA large subunit methyltransferase M from Yersinia pestis bv. Antiqua (strain Angola).